Here is a 166-residue protein sequence, read N- to C-terminus: Phosphopantetheine adenylyltransferase (166 aa).

Ser11 contacts substrate. ATP contacts are provided by residues 11–12 (SF) and His19. Positions 43, 75, and 89 each coordinate substrate. Residues 90-92 (GLR), Glu100, and 125-131 (YGYLSSS) contribute to the ATP site.

Belongs to the bacterial CoaD family. As to quaternary structure, homohexamer. The cofactor is Mg(2+).

The protein localises to the cytoplasm. It catalyses the reaction (R)-4'-phosphopantetheine + ATP + H(+) = 3'-dephospho-CoA + diphosphate. The protein operates within cofactor biosynthesis; coenzyme A biosynthesis; CoA from (R)-pantothenate: step 4/5. Its function is as follows. Reversibly transfers an adenylyl group from ATP to 4'-phosphopantetheine, yielding dephospho-CoA (dPCoA) and pyrophosphate. The chain is Phosphopantetheine adenylyltransferase from Syntrophotalea carbinolica (strain DSM 2380 / NBRC 103641 / GraBd1) (Pelobacter carbinolicus).